The following is a 193-amino-acid chain: MNFLAHLHLAHLAESSLSGNLLADFVRGNPEESFPPDVVAGIHMHRRIDVLTDNLPEVREAREWFRNETRRVAPITLDVMWDHFLSRHWSQLSPDFPLQEFTCYAREQVMTILPDSPPRFINLNNYLWSERWLVRYRDMDFIQSVLNGMASRRPRLDALRDSWYDLDAHYDALETRFWQFYPRMMEQASRKAL.

It belongs to the AcpH family.

The catalysed reaction is holo-[ACP] + H2O = apo-[ACP] + (R)-4'-phosphopantetheine + H(+). Converts holo-ACP to apo-ACP by hydrolytic cleavage of the phosphopantetheine prosthetic group from ACP. In Escherichia coli O6:K15:H31 (strain 536 / UPEC), this protein is Acyl carrier protein phosphodiesterase.